We begin with the raw amino-acid sequence, 61 residues long: Mu-diguetoxin-Dc1c (61 aa).

3 disulfides stabilise this stretch: Cys-12–Cys-25, Cys-19–Cys-39, and Cys-24–Cys-53.

It belongs to the neurotoxin 26 (DTX) family. Expressed by the venom gland.

It localises to the secreted. In terms of biological role, acts by delaying the inactivation of presynaptic voltage-sensitive sodium channels (Nav). Acts against insects and causes a progressive spastic paralysis. This Diguetia canities (Desert bush spider) protein is Mu-diguetoxin-Dc1c.